Consider the following 658-residue polypeptide: Glycogen debranching enzyme (658 aa).

Catalysis depends on aspartate 336, which acts as the Nucleophile. Glutamate 371 (proton donor) is an active-site residue. The segment at 459-486 (EANGEENRDGTNSNYSDNNGKEGLGGPL) is disordered.

The protein belongs to the glycosyl hydrolase 13 family.

It catalyses the reaction Hydrolysis of (1-&gt;6)-alpha-D-glucosidic linkages to branches with degrees of polymerization of three or four glucose residues in limit dextrin.. Its pathway is glycan degradation; glycogen degradation. Removes maltotriose and maltotetraose chains that are attached by 1,6-alpha-linkage to the limit dextrin main chain, generating a debranched limit dextrin. The protein is Glycogen debranching enzyme of Salmonella gallinarum (strain 287/91 / NCTC 13346).